We begin with the raw amino-acid sequence, 365 residues long: Aminomethyltransferase (365 aa).

The protein belongs to the GcvT family. As to quaternary structure, the glycine cleavage system is composed of four proteins: P, T, L and H.

The catalysed reaction is N(6)-[(R)-S(8)-aminomethyldihydrolipoyl]-L-lysyl-[protein] + (6S)-5,6,7,8-tetrahydrofolate = N(6)-[(R)-dihydrolipoyl]-L-lysyl-[protein] + (6R)-5,10-methylene-5,6,7,8-tetrahydrofolate + NH4(+). Functionally, the glycine cleavage system catalyzes the degradation of glycine. The chain is Aminomethyltransferase from Pelodictyon phaeoclathratiforme (strain DSM 5477 / BU-1).